The chain runs to 346 residues: MRKTSKMINQIYQLTKPKFINVKYQEEAIDQENHILIRPNYMAVCHADQRYYQGKRDPKILNKKLPMAMIHESCGTVISDPTGTYEVGQKVVMIPNQSPMQSDEEFYENYMTGTHFLSSGFDGFMREFVSLPKDRVVAYDAIEDTVAAITEFVSVGMHAMNRLLTLAHSKRERIAVIGDGSLAFVVANIINYTLPEAEIVVIGRHWEKLELFSFAKECYITDNIPEDLAFDHAFECCGGDGTGPAINDLIRYIRPQGTILMMGVSEYKVNLNTRDALEKGLILVGSSRSGRIDFENAIQMMEVKKFANRLKNILYLEEPVREIKDIHRVFATDLNTAFKTVFKWEV.

Zn(2+) is bound by residues Cys-45, His-71, Glu-72, and Glu-151.

It belongs to the zinc-containing alcohol dehydrogenase family. Requires Zn(2+) as cofactor.

It catalyses the reaction D-ribitol 5-phosphate + NADP(+) = D-ribulose 5-phosphate + NADPH + H(+). It functions in the pathway cell wall biogenesis; poly(ribitol phosphate) teichoic acid biosynthesis. Catalyzes the NADPH dependent reduction of D-ribulose 5-phosphate to D-ribitol 5-phosphate. This Streptococcus pneumoniae (strain ATCC BAA-255 / R6) protein is Ribulose-5-phosphate reductase.